A 338-amino-acid chain; its full sequence is Glycerol-3-phosphate dehydrogenase [NAD(P)+] (338 aa).

NADPH contacts are provided by W11, R30, and K107. Sn-glycerol 3-phosphate is bound by residues K107, G140, and S142. Residue A144 participates in NADPH binding. Positions 195, 248, 258, 259, and 260 each coordinate sn-glycerol 3-phosphate. K195 functions as the Proton acceptor in the catalytic mechanism. Position 259 (R259) interacts with NADPH. NADPH is bound by residues V283 and E285.

Belongs to the NAD-dependent glycerol-3-phosphate dehydrogenase family.

The protein resides in the cytoplasm. It catalyses the reaction sn-glycerol 3-phosphate + NAD(+) = dihydroxyacetone phosphate + NADH + H(+). It carries out the reaction sn-glycerol 3-phosphate + NADP(+) = dihydroxyacetone phosphate + NADPH + H(+). It functions in the pathway membrane lipid metabolism; glycerophospholipid metabolism. Catalyzes the reduction of the glycolytic intermediate dihydroxyacetone phosphate (DHAP) to sn-glycerol 3-phosphate (G3P), the key precursor for phospholipid synthesis. In Ralstonia nicotianae (strain ATCC BAA-1114 / GMI1000) (Ralstonia solanacearum), this protein is Glycerol-3-phosphate dehydrogenase [NAD(P)+].